Reading from the N-terminus, the 273-residue chain is Rho GTPase-activating protein gacB (273 aa).

The Rho-GAP domain maps to 1-192; sequence MTDQTLRLEN…YLISHFNEIF (192 aa).

The protein localises to the cytoplasm. In terms of biological role, rho GTPase-activating protein involved in the signal transduction pathway. In Dictyostelium discoideum (Social amoeba), this protein is Rho GTPase-activating protein gacB (gacB).